A 22-amino-acid polypeptide reads, in one-letter code: 2.39 kDa venom peptide (22 aa).

Contains 2 disulfide bonds. In terms of tissue distribution, expressed by the venom gland.

Its subcellular location is the secreted. Not lethal to mice by intraperitoneal or intracerebroventricular injections in doses up to 100 micrograms. This chain is 2.39 kDa venom peptide, found in Heterometrus spinifer (Asia giant forest scorpion).